Here is a 160-residue protein sequence, read N- to C-terminus: 2-C-methyl-D-erythritol 2,4-cyclodiphosphate synthase (160 aa).

A divalent metal cation is bound by residues Asp-9 and His-11. Residues 9–11 (DVH) and 35–36 (HS) each bind 4-CDP-2-C-methyl-D-erythritol 2-phosphate. His-43 contacts a divalent metal cation. Residues 57 to 59 (DIG), 62 to 66 (FPDTD), 133 to 136 (TTTE), Phe-140, and Arg-143 contribute to the 4-CDP-2-C-methyl-D-erythritol 2-phosphate site.

It belongs to the IspF family. In terms of assembly, homotrimer. The cofactor is a divalent metal cation.

It carries out the reaction 4-CDP-2-C-methyl-D-erythritol 2-phosphate = 2-C-methyl-D-erythritol 2,4-cyclic diphosphate + CMP. It participates in isoprenoid biosynthesis; isopentenyl diphosphate biosynthesis via DXP pathway; isopentenyl diphosphate from 1-deoxy-D-xylulose 5-phosphate: step 4/6. Its function is as follows. Involved in the biosynthesis of isopentenyl diphosphate (IPP) and dimethylallyl diphosphate (DMAPP), two major building blocks of isoprenoid compounds. Catalyzes the conversion of 4-diphosphocytidyl-2-C-methyl-D-erythritol 2-phosphate (CDP-ME2P) to 2-C-methyl-D-erythritol 2,4-cyclodiphosphate (ME-CPP) with a corresponding release of cytidine 5-monophosphate (CMP). The chain is 2-C-methyl-D-erythritol 2,4-cyclodiphosphate synthase from Haemophilus ducreyi (strain 35000HP / ATCC 700724).